The following is a 1248-amino-acid chain: Structural polyprotein (1248 aa).

Positions 1 to 10 are enriched in polar residues; it reads MEFIPTQTFY. The interval 1-104 is disordered; sequence MEFIPTQTFY…KKKKPGRRER (104 aa). Residues 36-68 are host transcription inhibition; sequence RKAGQLAQLISAVNKLTMRAVPQQKPRKNRKNK. A compositionally biased stretch (basic residues) spans 60 to 72; sequence KPRKNRKNKKQKQ. Residues 61-99 carry the Nuclear localization signal motif; it reads PRKNRKNKKQKQKQQAPRNNMNQKKQPPKKKPAQKKKKP. The segment covering 73-85 has biased composition (low complexity); the sequence is KQQAPRNNMNQKK. Residues 84-114 are binding to the viral RNA; sequence KKQPPKKKPAQKKKKPGRRERMCMKIENDCI. The span at 86–101 shows a compositional bias: basic residues; it reads QPPKKKPAQKKKKPGR. The interval 99–113 is ribosome-binding; sequence PGRRERMCMKIENDC. Cys-113 and Cys-128 are oxidised to a cystine. One can recognise a Peptidase S3 domain in the interval 113-261; the sequence is CIFEVKHEGK…KITPEGAEEW (149 aa). His-139 serves as the catalytic Charge relay system. The Nuclear export signal motif lies at 144-154; sequence IDNADLAKLAF. An interaction with spike glycoprotein E2 region spans residues 155–160; that stretch reads KRSSKY. Asp-161 functions as the Charge relay system in the catalytic mechanism. The segment at 183–193 is dimerization of the capsid protein; it reads PEGYYNWHHGA. Residue Ser-213 is the Charge relay system of the active site. The dimerization of the capsid protein stretch occupies residues 219 to 223; it reads DNKGR. Residues 262–274 form a functions as an uncleaved signal peptide for the precursor of protein E3/E2 region; the sequence is SLAIPVMCLLANT. Residues 262–692 lie on the Extracellular side of the membrane; the sequence is SLAIPVMCLL…YYYELYPTMT (431 aa). 9 cysteine pairs are disulfide-bonded: Cys-269/Cys-278, Cys-283/Cys-287, Cys-286/Cys-318, Cys-344/Cys-450, Cys-347/Cys-353, Cys-416/Cys-430, Cys-478/Cys-591, Cys-526/Cys-550, and Cys-528/Cys-545. Asn-273 carries an N-linked (GlcNAc...) asparagine; by host glycan. Interaction with host Mxra8 receptor regions lie at residues 351–354 and 387–389; these read HSCH and HDW. 2 interaction with host Mxra8 receptor regions span residues 509–512 and 541–547; these read QSGN and VINNCKV. N-linked (GlcNAc...) asparagine; by host glycosylation is found at Asn-588 and Asn-670. A helical transmembrane segment spans residues 693–713; sequence VVVVSVASFVLLSMVGVAVGM. The Cytoplasmic segment spans residues 714–748; it reads CMCARRRCITPYELTPGATVPFLLSLICCIRTAKA. An interaction with the capsid protein region spans residues 716-720; the sequence is CARRR. 3 S-palmitoyl cysteine; by host lipidation sites follow: Cys-721, Cys-741, and Cys-742. The segment at 721 to 741 is transient transmembrane before p62-6K protein processing; it reads CITPYELTPGATVPFLLSLIC. Cys-721 and Cys-742 are oxidised to a cystine. Over 749-763 the chain is Extracellular; it reads ATYQEAAVYLWNEQQ. The helical transmembrane segment at 764–784 threads the bilayer; that stretch reads PLFWLQAIIPLAALIVLCNCL. Over 785 to 795 the chain is Cytoplasmic; sequence RLLPCCCKTLT. The helical transmembrane segment at 796 to 816 threads the bilayer; that stretch reads FLAVMSVGAHTVSAYEHVTVI. Residues 817–1224 are Extracellular-facing; sequence PNTVGVPYKT…AMSWVQKITG (408 aa). 3 cysteine pairs are disulfide-bonded: Cys-858–Cys-923, Cys-871–Cys-903, and Cys-877–Cys-887. An E1 fusion peptide loop region spans residues 893 to 910; sequence VYPFMWGGAYCFCDTENT. 2 N-linked (GlcNAc...) asparagine; by host glycosylation sites follow: Asn-950 and Asn-1079. Disulfide bonds link Cys-1068–Cys-1080, Cys-1110–Cys-1185, Cys-1115–Cys-1189, and Cys-1137–Cys-1179. Residues 1225–1245 form a helical membrane-spanning segment; it reads GVGLVVAVAALILIVVLCVSF. Residue Cys-1242 is the site of S-palmitoyl cysteine; by host attachment. Over 1246–1248 the chain is Cytoplasmic; it reads SRH.

As to quaternary structure, homodimer. Homomultimer. Interacts with host karyopherin KPNA4; this interaction allows the nuclear import of the viral capsid protein. Interacts with spike glycoprotein E2. Interacts with host IRAK1; the interaction leads to inhibition of IRAK1-dependent signaling. In terms of assembly, the precursor of protein E3/E2 and E1 form a heterodimer shortly after synthesis. Interacts with spike glycoprotein E2. The precursor of protein E3/E2 and E1 form a heterodimer shortly after synthesis. Processing of the precursor of protein E3/E2 into E2 and E3 results in a heterodimer of the spike glycoproteins E2 and E1. Spike at virion surface are constituted of three E2-E1 heterodimers. After target cell attachment and endocytosis, E1 change conformation to form homotrimers. Interacts with 6K protein. Interacts with host MXRA8; this interaction mediates virus entry. The interaction involves 2 adjacent E2-E1 heterodimers. As to quaternary structure, interacts with spike glycoprotein E1. Processing of the precursor of protein E3/E2 into E2 and E3 results in a heterodimer of the spike glycoproteins E2 and E1. Spike at virion surface are constituted of a trimer of E2-E1 heterodimers. Interacts with 6K protein. Interacts with host MXRA8; this interaction mediates virus entry. The interaction involves 2 adjacent E2-E1 heterodimers. In terms of assembly, oligomer. Interacts with spike glycoprotein E1. Interacts with spike glycoprotein E2. In terms of processing, structural polyprotein: Specific enzymatic cleavages in vivo yield mature proteins. Capsid protein is auto-cleaved during polyprotein translation, unmasking a signal peptide at the N-terminus of the precursor of E3/E2. The remaining polyprotein is then targeted to the host endoplasmic reticulum, where host signal peptidase cleaves it into pE2, 6K and E1 proteins. pE2 is further processed to mature E3 and E2 by host furin in trans-Golgi vesicle. Palmitoylated via thioester bonds. These palmitoylations may induce disruption of the C-terminus transmembrane. This would result in the reorientation of E2 C-terminus from lumenal to cytoplasmic side. Post-translationally, N-glycosylated. In terms of processing, palmitoylated via thioester bonds.

The protein localises to the virion. It localises to the host cytoplasm. It is found in the host cell membrane. The protein resides in the host nucleus. Its subcellular location is the virion membrane. The protein localises to the host Golgi apparatus. It localises to the host trans-Golgi network. It is found in the host endoplasmic reticulum. It catalyses the reaction Autocatalytic release of the core protein from the N-terminus of the togavirus structural polyprotein by hydrolysis of a -Trp-|-Ser- bond.. Forms an icosahedral capsid with a T=4 symmetry composed of 240 copies of the capsid protein surrounded by a lipid membrane through which penetrate 80 spikes composed of trimers of E1-E2 heterodimers. The capsid protein binds to the viral RNA genome at a site adjacent to a ribosome binding site for viral genome translation following genome release. Possesses a protease activity that results in its autocatalytic cleavage from the nascent structural protein. Following its self-cleavage, the capsid protein transiently associates with ribosomes, and within several minutes the protein binds to viral RNA and rapidly assembles into icosahedric core particles. The resulting nucleocapsid eventually associates with the cytoplasmic domain of the spike glycoprotein E2 at the cell membrane, leading to budding and formation of mature virions. In case of infection, new virions attach to target cells and after clathrin-mediated endocytosis their membrane fuses with the host endosomal membrane. This leads to the release of the nucleocapsid into the cytoplasm, followed by an uncoating event necessary for the genomic RNA to become accessible. The uncoating might be triggered by the interaction of capsid proteins with ribosomes. Binding of ribosomes would release the genomic RNA since the same region is genomic RNA-binding and ribosome-binding. Specifically inhibits interleukin-1 receptor-associated kinase 1/IRAK1-dependent signaling during viral entry, representing a means by which the alphaviruses may evade innate immune detection and activation prior to viral gene expression. Degrades host cyclic GMP-AMP synthase (CGAS) thereby inhibiting the cGAS-STING pathway. Its function is as follows. Provides the signal sequence for the translocation of the precursor of protein E3/E2 to the host endoplasmic reticulum. Furin-cleaved E3 remains associated with spike glycoprotein E1 and mediates pH protection of the latter during the transport via the secretory pathway. After virion release from the host cell, the assembly protein E3 is gradually released in the extracellular space. In terms of biological role, plays a role in viral attachment to target host cell, by binding to the cell receptor MXRA8. Synthesized as a p62 precursor which is processed by furin at the cell membrane just before virion budding, giving rise to E2-E1 heterodimer. The p62-E1 heterodimer is stable, whereas E2-E1 is unstable and dissociate at low pH. p62 is processed at the last step, presumably to avoid E1 fusion activation before its final export to cell surface. E2 C-terminus contains a transitory transmembrane that would be disrupted by palmitoylation, resulting in reorientation of the C-terminal tail from lumenal to cytoplasmic side. This step is critical since E2 C-terminus is involved in budding by interacting with capsid proteins. This release of E2 C-terminus in cytoplasm occurs lately in protein export, and precludes premature assembly of particles at the endoplasmic reticulum membrane. Functionally, acts as a viroporin that participates in virus glycoprotein processing and transport to the plasma membrane, cell permeabilization and budding of viral particles. Disrupts the calcium homeostasis of the cell, probably at the endoplasmic reticulum level. This leads to cytoplasmic calcium elevation. Because of its lipophilic properties, the 6K protein is postulated to influence the selection of lipids that interact with the transmembrane domains of the glycoproteins, which, in turn, affects the deformability of the bilayer required for the extreme curvature that occurs as budding proceeds. Present in low amount in virions, about 3% compared to viral glycoproteins. Class II viral fusion protein. Fusion activity is inactive as long as E1 is bound to E2 in mature virion. After virus attachment to target cell via host MXRA8 and endocytosis, acidification of the endosome induce dissociation of E1/E2 heterodimer and concomitant trimerization of the E1 subunits. This E1 trimer is fusion active, and promotes release of viral nucleocapsid in cytoplasm after endosome and viral membrane fusion. Efficient fusion requires the presence of cholesterol and sphingolipid in the target membrane. The protein is Structural polyprotein of Chikungunya virus (strain Nagpur) (CHIKV).